The sequence spans 63 residues: Large ribosomal subunit protein eL37 (63 aa).

Positions 20, 23, 35, and 38 each coordinate Zn(2+). A C4-type zinc finger spans residues 20–38 (CRRCGHHSFNVRKGYCAHC).

It belongs to the eukaryotic ribosomal protein eL37 family. Requires Zn(2+) as cofactor.

Functionally, binds to the 23S rRNA. This Thermofilum pendens (strain DSM 2475 / Hrk 5) protein is Large ribosomal subunit protein eL37.